Reading from the N-terminus, the 512-residue chain is 2,3-bisphosphoglycerate-independent phosphoglycerate mutase (512 aa).

2 residues coordinate Mn(2+): Asp12 and Ser62. Ser62 serves as the catalytic Phosphoserine intermediate. Substrate contacts are provided by residues His123, 154–155 (RD), Arg181, Arg187, 253–256 (RPDR), and Lys336. Mn(2+) is bound by residues Asp403, His407, Asp444, His445, and His462.

Belongs to the BPG-independent phosphoglycerate mutase family. In terms of assembly, monomer. Requires Mn(2+) as cofactor.

It catalyses the reaction (2R)-2-phosphoglycerate = (2R)-3-phosphoglycerate. It functions in the pathway carbohydrate degradation; glycolysis; pyruvate from D-glyceraldehyde 3-phosphate: step 3/5. Functionally, catalyzes the interconversion of 2-phosphoglycerate and 3-phosphoglycerate. This Aster yellows witches'-broom phytoplasma (strain AYWB) protein is 2,3-bisphosphoglycerate-independent phosphoglycerate mutase.